The chain runs to 352 residues: Guanidino acid hydrolase, mitochondrial (352 aa).

A mitochondrion-targeting transit peptide spans 1-35; that stretch reads MLRLLASGCARGPGPGVGARPAAGLFHPGRRQSRQ. The interval 11–49 is disordered; that stretch reads RGPGPGVGARPAAGLFHPGRRQSRQASDAPRNQPPSPEF. The Mn(2+) site is built by H162, D185, H187, and D189. K193 carries the post-translational modification N6-acetyllysine. K217 carries the N6-acetyllysine; alternate modification. N6-succinyllysine; alternate is present on K217. Mn(2+) contacts are provided by D276 and D278.

Belongs to the ureohydrolase superfamily. Arginase family. The cofactor is Mn(2+). In terms of tissue distribution, highly expressed in liver and kidney. Also found in skeletal muscle, fetal liver, brain, testis, skin and the gastrointestinal tract. Within brain, expression is higher in the cerebral cortex with lower levels in the medulla and spinal cord.

It is found in the mitochondrion. The enzyme catalyses 3-guanidinopropanoate + H2O = urea + beta-alanine. The catalysed reaction is 4-guanidinobutanoate + H2O = urea + 4-aminobutanoate. It carries out the reaction taurocyamine + H2O = urea + taurine. It catalyses the reaction L-arginine + H2O = urea + L-ornithine. It participates in nitrogen metabolism; urea cycle; L-ornithine and urea from L-arginine: step 1/1. In terms of biological role, hydrolyzes linear guanidino acids to form urea and the corresponding amines. Displays specificity for substrates having a negatively charged head group and short chains including taurocyamine, guanidino propanoic and butanoic acids. May protect cells by detoxifying potentially harmful amounts of guanidino acids. Metabolizes L-arginine with low efficiency. In Homo sapiens (Human), this protein is Guanidino acid hydrolase, mitochondrial (AGMAT).